We begin with the raw amino-acid sequence, 354 residues long: tRNA N6-adenosine threonylcarbamoyltransferase (354 aa).

Fe cation is bound by residues His-111 and His-115. Substrate contacts are provided by residues 134–138 (LVSGG), Asp-167, Gly-180, and Asn-279. Asp-319 serves as a coordination point for Fe cation.

This sequence belongs to the KAE1 / TsaD family. It depends on Fe(2+) as a cofactor.

Its subcellular location is the cytoplasm. It catalyses the reaction L-threonylcarbamoyladenylate + adenosine(37) in tRNA = N(6)-L-threonylcarbamoyladenosine(37) in tRNA + AMP + H(+). In terms of biological role, required for the formation of a threonylcarbamoyl group on adenosine at position 37 (t(6)A37) in tRNAs that read codons beginning with adenine. Is involved in the transfer of the threonylcarbamoyl moiety of threonylcarbamoyl-AMP (TC-AMP) to the N6 group of A37, together with TsaE and TsaB. TsaD likely plays a direct catalytic role in this reaction. In Neisseria meningitidis serogroup C / serotype 2a (strain ATCC 700532 / DSM 15464 / FAM18), this protein is tRNA N6-adenosine threonylcarbamoyltransferase.